The following is a 325-amino-acid chain: PGQLGNSGKPGQQGPPGEVGPRGPRGLPGSRGPVGPEGSPGIPGKLGPLGSPGLPGLPGPPGLPGMKGDRGVFGEPGPKGEQGASGEEGEAGVRGDLGDMGQPGPKGSVGNPGEPGLRGPEGIRGLPGVEGPRGPPGPRGVQGEQGATGLPGIQGPPGRAPTDQHIKQVCMRVVQEHFAEMAASLKRPDTGASGLPGRPGPPGPPGPPGENGFPGQMGIRGLPGIKGPPGALGLRGPKGDLGEKGERGPPGRGPKGLPGAIGLPGDPGPASYGKNGRDGEQGPPGVAGIPGVPGPPGPPGPPGFCEPASCTLQAGQRAFSKGPDK.

Residues 1–54 are compositionally biased toward low complexity; the sequence is PGQLGNSGKPGQQGPPGEVGPRGPRGLPGSRGPVGPEGSPGIPGKLGPLGSPGL. Disordered regions lie at residues 1–163 and 187–325; these read PGQL…APTD and RPDT…GPDK. Over residues 198 to 208 the composition is skewed to pro residues; the sequence is RPGPPGPPGPP. The span at 237 to 249 shows a compositional bias: basic and acidic residues; the sequence is PKGDLGEKGERGP. Positions 292-304 are enriched in pro residues; sequence VPGPPGPPGPPGF.

The protein belongs to the fibril-associated collagens with interrupted helices (FACIT) family. Heterotrimer of an alpha 1(IX), an alpha 2(IX) and an alpha 3(IX) chain. Covalently linked to the telopeptides of type II collagen by lysine-derived cross-links. In terms of processing, prolines at the third position of the tripeptide repeating unit (G-X-Y) are hydroxylated in some or all of the chains.

Its subcellular location is the secreted. It localises to the extracellular space. The protein localises to the extracellular matrix. Its function is as follows. Structural component of hyaline cartilage and vitreous of the eye. In Rattus norvegicus (Rat), this protein is Collagen alpha-1(IX) chain (Col9a1).